Reading from the N-terminus, the 74-residue chain is Antimicrobial peptide 36.4 (74 aa).

The first 22 residues, 1 to 22, serve as a signal peptide directing secretion; that stretch reads MKVNVLLAVFLVVMVVTDHCHA. Lysine 39 is modified (lysine amide). A propeptide spanning residues 44 to 74 is cleaved from the precursor; that stretch reads LQMEARFQPQNKNYRKRELDLENLFTHMPDY.

The protein belongs to the non-disulfide-bridged peptide (NDBP) superfamily. Short antimicrobial peptide (group 4) family. In terms of tissue distribution, expressed by the venom gland.

It is found in the secreted. The protein localises to the target cell membrane. In terms of biological role, cationic host defense peptide that have antibacterial activity by breaking membranes. Is more effective on Gram-positive than on Gram-negative bacteria. In Lychas mucronatus (Chinese swimming scorpion), this protein is Antimicrobial peptide 36.4.